Reading from the N-terminus, the 198-residue chain is Virion infectivity factor (198 aa).

An RNA-binding region spans residues 76–115; the sequence is GERPWHLGHGIGLEWRQGKYSTQIDPETADQLIHTRYFTC. Thr97 carries the phosphothreonine; by host MAP4K1 modification. An HCCH motif motif is present at residues 109 to 140; the sequence is HTRYFTCFAAGAVRQAILGERILTFCHFQSGH. Thr145 bears the Phosphothreonine; by host mark. The BC-box-like motif motif lies at 145 to 154; the sequence is TLQFLAFRKV. The multimerization stretch occupies residues 152–170; the sequence is RKVVESQDKQPKGPRRPLP. The disordered stretch occupies residues 159-198; the sequence is DKQPKGPRRPLPSVTKLTEDRWNKHRTTTGRRENHTLSGC. Ser171 is subject to Phosphoserine; by host MAP4K1. The tract at residues 177 to 178 is membrane association; that stretch reads ED. Residues 188–198 show a composition bias toward basic and acidic residues; sequence GRRENHTLSGC.

The protein belongs to the primate lentivirus group Vif protein family. As to quaternary structure, homomultimer; in vitro and presumably in vivo. Interacts with viral Pr55Gag precursor, host APOBEC3G, UBCE7IP1 isoform 3/ZIN, ABCE1 and possibly with SAT. Forms an E3 ligase complex by interacting with host CUL5 and elongin BC complex (ELOB and ELOC). In terms of processing, highly phosphorylated on serine and threonine residues. Thr-97 and Ser-171 are phosphorylated by the mitogen activated kinase MAP4K1. Post-translationally, polyubiquitinated and degraded by the proteasome in the presence of APOBEC3G.

It localises to the host cytoplasm. Its subcellular location is the host cell membrane. It is found in the virion. Functionally, counteracts the innate antiviral activity of APOBEC3G. Forms a complex with host APOBEC3G thus preventing the entry of this lethally hypermutating enzyme into progeny virions. Functions as an adapter molecule, recruiting APOBEC3G to the ubiquitin-proteasome machinery. Targets APOBEC3G for degradation through the assembly with elongin BC complex, CUL5 and RBX1. Binds viral RNA and affects the stability of viral nucleoprotein core. May play a role in viral morphology. Interacts with host ABCE1, which seems to be involved in lentiviruses capsid formation and displays RNase L inhibitor activity. This interaction may play a role in protecting viral RNA from damage during viral assembly. May interact with host SAT, which is a regulator of polyamine cell level. This interaction may be relevant since polyamines affect viral RNA properties. The sequence is that of Virion infectivity factor from Pan troglodytes (Chimpanzee).